The following is a 154-amino-acid chain: MKNKITVILKKNLANLGSIGTVVKVSSGYAFNYLIPRDFAQLATQGSLKHHKMFLDMKQQKLDEIQDKLQASAQKFNKISKISVKKKVGNNNQIFGSVNDKEIISKLFSITGEKLEKKNIYLPNIKALGIYNLNIIFTSDIQVSMKLQILPFFA.

It belongs to the bacterial ribosomal protein bL9 family.

Its subcellular location is the plastid. The protein resides in the chloroplast. Its function is as follows. Binds to the 23S rRNA. In Gracilaria tenuistipitata var. liui (Red alga), this protein is Large ribosomal subunit protein bL9c.